The chain runs to 312 residues: Phospho-N-acetylmuramoyl-pentapeptide-transferase (312 aa).

9 consecutive transmembrane segments (helical) span residues Met-1–Lys-21, Gly-48–Ile-68, Glu-76–Leu-96, Phe-115–His-135, Gly-140–Val-160, Ala-165–Leu-185, Val-214–Leu-234, Val-238–Gln-258, and Val-289–Gly-309.

Belongs to the glycosyltransferase 4 family. MraY subfamily. Mg(2+) is required as a cofactor.

Its subcellular location is the cell membrane. The enzyme catalyses UDP-N-acetyl-alpha-D-muramoyl-L-alanyl-gamma-D-glutamyl-meso-2,6-diaminopimeloyl-D-alanyl-D-alanine + di-trans,octa-cis-undecaprenyl phosphate = di-trans,octa-cis-undecaprenyl diphospho-N-acetyl-alpha-D-muramoyl-L-alanyl-D-glutamyl-meso-2,6-diaminopimeloyl-D-alanyl-D-alanine + UMP. Its pathway is cell wall biogenesis; peptidoglycan biosynthesis. In terms of biological role, catalyzes the initial step of the lipid cycle reactions in the biosynthesis of the cell wall peptidoglycan: transfers peptidoglycan precursor phospho-MurNAc-pentapeptide from UDP-MurNAc-pentapeptide onto the lipid carrier undecaprenyl phosphate, yielding undecaprenyl-pyrophosphoryl-MurNAc-pentapeptide, known as lipid I. The polypeptide is Phospho-N-acetylmuramoyl-pentapeptide-transferase (Deinococcus radiodurans (strain ATCC 13939 / DSM 20539 / JCM 16871 / CCUG 27074 / LMG 4051 / NBRC 15346 / NCIMB 9279 / VKM B-1422 / R1)).